Here is a 142-residue protein sequence, read N- to C-terminus: Hemoglobin subunit alpha (142 aa).

In terms of domain architecture, Globin spans 2-142 (VLSSQNKKAI…VAYELSSCYR (141 aa)). Histidine 60 serves as a coordination point for O2. Histidine 89 contacts heme b.

It belongs to the globin family. In terms of assembly, heterotetramer of two alpha chains and two beta chains. As to expression, red blood cells.

Functionally, involved in oxygen transport from gills to the various peripheral tissues. The protein is Hemoglobin subunit alpha (hba) of Hemitrygon akajei (Red stingray).